Here is a 115-residue protein sequence, read N- to C-terminus: Thioredoxin-1 (115 aa).

The Thioredoxin domain occupies 2–114; that stretch reads LKRCNFKNQV…RQKVLEHVSA (113 aa). Catalysis depends on nucleophile residues Cys-39 and Cys-42. An intrachain disulfide couples Cys-39 to Cys-42.

Belongs to the thioredoxin family. Expressed in ASJ and ASI ciliated sensory neurons. Expressed in the intestine (at protein level).

In terms of biological role, participates in various redox reactions through the reversible oxidation of its active center dithiol to a disulfide and catalyzes dithiol-disulfide exchange reactions. Shown to facilitate the reduction of insulin disulfide bonds. Might play a role in the reversible nitrosylation of cysteine residues in target proteins, and thereby contributing to the response to intracellular nitric oxide. Shapes the ASJ sensory neuron biphasic response to nitric oxide (NO) exposure; trans-nitrosylation activity might inhibit calcium flux to the cytoplasm in ASJ neurons when exposed to a NO stimulus, whereas de-nitrosylation activity might promote calcium flux when NO is diminished. By regulating the NO-induced ASJ sensory neuron activity, mediates the avoidance response to NO-producing organisms like P.aeruginosa. Positively regulates life span extension under normal and caloric restriction conditions, dauer formation and the oxidative stress response. Contributes to the down-regulation of expression of the insulin-like neuropeptide daf-28 in the ASJ neurons in a redox-independent fashion, thereby promoting dauer formation. Negatively regulates the nuclear localization of the intestinal skn-1 transcription factor in a p38 MAPK pathway-dependent and redox-independent fashion. This chain is Thioredoxin-1 (trx-1), found in Caenorhabditis elegans.